The following is a 261-amino-acid chain: Cytochrome c oxidase subunit 3 (261 aa).

Topologically, residues 1–15 (MAHQAHAYHMVDPSP) are mitochondrial matrix. Residues 16–34 (WPLTGAIAALLMTSGLAIW) traverse the membrane as a helical segment. Residues 35–40 (FHFHST) lie on the Mitochondrial intermembrane side of the membrane. The chain crosses the membrane as a helical span at residues 41–66 (TLMTLGLILLLLTMYQWWRDIIREGT). Over 67-72 (FQGHHT) the chain is Mitochondrial matrix. A helical transmembrane segment spans residues 73 to 105 (PPVQKGLRYGMILFITSEVFFFLGFFWAFYHSS). Residues 106–128 (LAPTPELGGCWPPTGITPLDPFE) are Mitochondrial intermembrane-facing. A helical transmembrane segment spans residues 129 to 152 (VPLLNTAVLLASGVTVTWAHHSIM). At 153–155 (EGE) the chain is on the mitochondrial matrix side. The chain crosses the membrane as a helical span at residues 156-183 (RKQAIQSLALTILLGLYFTALQAMEYYE). Residues 184-190 (APFTIAD) lie on the Mitochondrial intermembrane side of the membrane. A helical transmembrane segment spans residues 191–223 (GVYGSTFFVATGFHGLHVIIGSTFLAVCLLRQI). Over 224–232 (QYHFTSEHH) the chain is Mitochondrial matrix. A helical membrane pass occupies residues 233–256 (FGFEAAAWYWHFVDVVWLFLYVSI). The Mitochondrial intermembrane portion of the chain corresponds to 257–261 (YWWGS).

It belongs to the cytochrome c oxidase subunit 3 family. Component of the cytochrome c oxidase (complex IV, CIV), a multisubunit enzyme composed of 14 subunits. The complex is composed of a catalytic core of 3 subunits MT-CO1, MT-CO2 and MT-CO3, encoded in the mitochondrial DNA, and 11 supernumerary subunits COX4I, COX5A, COX5B, COX6A, COX6B, COX6C, COX7A, COX7B, COX7C, COX8 and NDUFA4, which are encoded in the nuclear genome. The complex exists as a monomer or a dimer and forms supercomplexes (SCs) in the inner mitochondrial membrane with NADH-ubiquinone oxidoreductase (complex I, CI) and ubiquinol-cytochrome c oxidoreductase (cytochrome b-c1 complex, complex III, CIII), resulting in different assemblies (supercomplex SCI(1)III(2)IV(1) and megacomplex MCI(2)III(2)IV(2)).

Its subcellular location is the mitochondrion inner membrane. It carries out the reaction 4 Fe(II)-[cytochrome c] + O2 + 8 H(+)(in) = 4 Fe(III)-[cytochrome c] + 2 H2O + 4 H(+)(out). Its function is as follows. Component of the cytochrome c oxidase, the last enzyme in the mitochondrial electron transport chain which drives oxidative phosphorylation. The respiratory chain contains 3 multisubunit complexes succinate dehydrogenase (complex II, CII), ubiquinol-cytochrome c oxidoreductase (cytochrome b-c1 complex, complex III, CIII) and cytochrome c oxidase (complex IV, CIV), that cooperate to transfer electrons derived from NADH and succinate to molecular oxygen, creating an electrochemical gradient over the inner membrane that drives transmembrane transport and the ATP synthase. Cytochrome c oxidase is the component of the respiratory chain that catalyzes the reduction of oxygen to water. Electrons originating from reduced cytochrome c in the intermembrane space (IMS) are transferred via the dinuclear copper A center (CU(A)) of subunit 2 and heme A of subunit 1 to the active site in subunit 1, a binuclear center (BNC) formed by heme A3 and copper B (CU(B)). The BNC reduces molecular oxygen to 2 water molecules using 4 electrons from cytochrome c in the IMS and 4 protons from the mitochondrial matrix. The polypeptide is Cytochrome c oxidase subunit 3 (mt-co3) (Cyprinus carpio (Common carp)).